The sequence spans 537 residues: Phosphoenolpyruvate carboxykinase (ATP) (537 aa).

Substrate-binding residues include Arg61, Tyr195, and Lys201. Residues Lys201, His220, and 236-244 (GLSGTGKTT) contribute to the ATP site. Mn(2+)-binding residues include Lys201 and His220. Asp257 lines the Mn(2+) pocket. Glu285 is a binding site for ATP. Basic and acidic residues predominate over residues 311 to 321 (PDFDNGSKTEN). The interval 311–342 (PDFDNGSKTENTRSAYPLESIPNASPTGRAGQ) is disordered. Arg323 is a substrate binding site. The ATP site is built by Arg323 and Thr448.

This sequence belongs to the phosphoenolpyruvate carboxykinase (ATP) family. Mn(2+) is required as a cofactor.

The protein localises to the cytoplasm. The enzyme catalyses oxaloacetate + ATP = phosphoenolpyruvate + ADP + CO2. It functions in the pathway carbohydrate biosynthesis; gluconeogenesis. Functionally, involved in the gluconeogenesis. Catalyzes the conversion of oxaloacetate (OAA) to phosphoenolpyruvate (PEP) through direct phosphoryl transfer between the nucleoside triphosphate and OAA. The chain is Phosphoenolpyruvate carboxykinase (ATP) from Rhodopseudomonas palustris (strain BisB5).